Consider the following 309-residue polypeptide: Probable cell division protein kinase ECU11_1290 (309 aa).

Residues 4-288 form the Protein kinase domain; the sequence is YENIKQVGEG…VISSHKNTYI (285 aa). ATP is bound by residues 10-18 and K33; that span reads VGEGAFGQV. D124 functions as the Proton acceptor in the catalytic mechanism.

It belongs to the protein kinase superfamily. CMGC Ser/Thr protein kinase family. CDC2/CDKX subfamily.

It localises to the nucleus. The catalysed reaction is L-seryl-[protein] + ATP = O-phospho-L-seryl-[protein] + ADP + H(+). It carries out the reaction L-threonyl-[protein] + ATP = O-phospho-L-threonyl-[protein] + ADP + H(+). Its function is as follows. May play a role in the control of the eukaryotic cell cycle. The protein is Probable cell division protein kinase ECU11_1290 of Encephalitozoon cuniculi (strain GB-M1) (Microsporidian parasite).